A 608-amino-acid chain; its full sequence is Replication protein E1 (608 aa).

The Nuclear localization signal motif lies at 83–85 (KRK). Phosphoserine; by host occurs at positions 88 and 96. Residues 148-311 (QGGVGSGHYT…TMIHHQTADS (164 aa)) are DNA-binding region. Positions 410–560 (LNFIVFLDKF…FPFDANDTPL (151 aa)) constitute an SF3 helicase domain. ATP is bound at residue 436–443 (GPPDTGKS). Residue Lys517 forms a Glycyl lysine isopeptide (Lys-Gly) (interchain with G-Cter in SUMO) linkage.

This sequence belongs to the papillomaviridae E1 protein family. In terms of assembly, can form hexamers. Interacts with E2 protein; this interaction increases E1 DNA binding specificity. Interacts with host DNA polymerase subunit POLA2. Interacts with host single stranded DNA-binding protein RPA1. Interacts with host TOP1; this interaction stimulates the enzymatic activity of TOP1. In terms of processing, phosphorylated. Sumoylated.

Its subcellular location is the host nucleus. The catalysed reaction is Couples ATP hydrolysis with the unwinding of duplex DNA by translocating in the 3'-5' direction.. It catalyses the reaction ATP + H2O = ADP + phosphate + H(+). ATP-dependent DNA 3'-5' helicase required for initiation of viral DNA replication. It forms a complex with the viral E2 protein. The E1-E2 complex binds to the replication origin which contains binding sites for both proteins. During the initial step, a dimer of E1 interacts with a dimer of protein E2 leading to a complex that binds the viral origin of replication with high specificity. Then, a second dimer of E1 displaces the E2 dimer in an ATP-dependent manner to form the E1 tetramer. Following this, two E1 monomers are added to each half of the site, which results in the formation of two E1 trimers on the viral ori. Subsequently, two hexamers will be created. The double hexamer acts as a bi-directional helicase machinery and unwinds the viral DNA and then recruits the host DNA polymerase to start replication. This chain is Replication protein E1, found in Homo sapiens (Human).